The chain runs to 209 residues: Thymidine kinase (209 aa).

Residues 9-16 and 88-91 contribute to the ATP site; these read SAMNAGKT and DEAQ. Glu-89 (proton acceptor) is an active-site residue.

It belongs to the thymidine kinase family. Homotetramer.

The protein localises to the cytoplasm. The enzyme catalyses thymidine + ATP = dTMP + ADP + H(+). This chain is Thymidine kinase, found in Xanthomonas campestris pv. campestris (strain 8004).